Here is a 392-residue protein sequence, read N- to C-terminus: Phosphoglycerate kinase (392 aa).

Residues 21-23 (DFN), R36, 59-62 (HLGR), R117, and R150 contribute to the substrate site. Residues K200, G288, E319, and 345-348 (GGDS) each bind ATP.

Belongs to the phosphoglycerate kinase family. In terms of assembly, monomer.

The protein resides in the cytoplasm. It catalyses the reaction (2R)-3-phosphoglycerate + ATP = (2R)-3-phospho-glyceroyl phosphate + ADP. The protein operates within carbohydrate degradation; glycolysis; pyruvate from D-glyceraldehyde 3-phosphate: step 2/5. This chain is Phosphoglycerate kinase, found in Rubrobacter xylanophilus (strain DSM 9941 / JCM 11954 / NBRC 16129 / PRD-1).